The primary structure comprises 29 residues: Dander allergen Equ c 2.0101 (29 aa).

Belongs to the calycin superfamily. Lipocalin family.

Its subcellular location is the secreted. The polypeptide is Dander allergen Equ c 2.0101 (Equus caballus (Horse)).